A 185-amino-acid chain; its full sequence is Ribosome-recycling factor (185 aa).

This sequence belongs to the RRF family.

Its subcellular location is the cytoplasm. Its function is as follows. Responsible for the release of ribosomes from messenger RNA at the termination of protein biosynthesis. May increase the efficiency of translation by recycling ribosomes from one round of translation to another. The protein is Ribosome-recycling factor of Brevibacillus brevis (strain 47 / JCM 6285 / NBRC 100599).